The following is a 266-amino-acid chain: Undecaprenyl-diphosphatase (266 aa).

7 helical membrane passes run 38 to 58, 80 to 100, 108 to 128, 136 to 156, 176 to 196, 217 to 237, and 245 to 265; these read SDMF…IIYW, LIVA…VLHF, PIAW…WAAA, ITWL…IFPG, AAAT…ASGY, IAFV…LAYI, and FAVY…TGLI.

The protein belongs to the UppP family.

The protein localises to the cell inner membrane. It carries out the reaction di-trans,octa-cis-undecaprenyl diphosphate + H2O = di-trans,octa-cis-undecaprenyl phosphate + phosphate + H(+). Catalyzes the dephosphorylation of undecaprenyl diphosphate (UPP). Confers resistance to bacitracin. The chain is Undecaprenyl-diphosphatase from Rhizobium leguminosarum bv. trifolii (strain WSM2304).